A 189-amino-acid chain; its full sequence is UPF0301 protein RAF_ORF0041 (189 aa).

It belongs to the UPF0301 (AlgH) family.

The sequence is that of UPF0301 protein RAF_ORF0041 from Rickettsia africae (strain ESF-5).